Reading from the N-terminus, the 503-residue chain is Aspartyl/glutamyl-tRNA(Asn/Gln) amidotransferase subunit B (503 aa).

This sequence belongs to the GatB/GatE family. GatB subfamily. As to quaternary structure, heterotrimer of A, B and C subunits.

The catalysed reaction is L-glutamyl-tRNA(Gln) + L-glutamine + ATP + H2O = L-glutaminyl-tRNA(Gln) + L-glutamate + ADP + phosphate + H(+). It carries out the reaction L-aspartyl-tRNA(Asn) + L-glutamine + ATP + H2O = L-asparaginyl-tRNA(Asn) + L-glutamate + ADP + phosphate + 2 H(+). Its function is as follows. Allows the formation of correctly charged Asn-tRNA(Asn) or Gln-tRNA(Gln) through the transamidation of misacylated Asp-tRNA(Asn) or Glu-tRNA(Gln) in organisms which lack either or both of asparaginyl-tRNA or glutaminyl-tRNA synthetases. The reaction takes place in the presence of glutamine and ATP through an activated phospho-Asp-tRNA(Asn) or phospho-Glu-tRNA(Gln). This Cereibacter sphaeroides (strain KD131 / KCTC 12085) (Rhodobacter sphaeroides) protein is Aspartyl/glutamyl-tRNA(Asn/Gln) amidotransferase subunit B.